The sequence spans 415 residues: Acetyl-CoA acetyltransferase 1 (415 aa).

C99 serves as the catalytic Acyl-thioester intermediate. K239 contributes to the CoA binding site. A256 serves as a coordination point for K(+). Position 260 (S260) interacts with CoA. V357 contributes to the K(+) binding site. Active-site proton acceptor residues include H361 and C391.

This sequence belongs to the thiolase-like superfamily. Thiolase family. In terms of tissue distribution, expressed in the vascular system of roots, cotyledons, young leaves, fully expanded leaves, stems, flowers, and funiculi of siliques.

It is found in the cytoplasm. It localises to the peroxisome. The enzyme catalyses 2 acetyl-CoA = acetoacetyl-CoA + CoA. The protein operates within metabolic intermediate biosynthesis; (R)-mevalonate biosynthesis; (R)-mevalonate from acetyl-CoA: step 1/3. Functionally, catalyzes the condensation of two molecules of acetyl-CoA to produce acetoacetyl-CoA. This chain is Acetyl-CoA acetyltransferase 1, found in Arabidopsis thaliana (Mouse-ear cress).